The chain runs to 71 residues: Sec-independent protein translocase protein TatA (71 aa).

Residues 1–21 (MGSFSIWHWLIVLVIVALIFG) form a helical membrane-spanning segment. Positions 48-71 (ADKTEQVTQQQTTIDVQAKEKQNS) are disordered.

Belongs to the TatA/E family. As to quaternary structure, the Tat system comprises two distinct complexes: a TatABC complex, containing multiple copies of TatA, TatB and TatC subunits, and a separate TatA complex, containing only TatA subunits. Substrates initially bind to the TatABC complex, which probably triggers association of the separate TatA complex to form the active translocon.

It is found in the cell inner membrane. Its function is as follows. Part of the twin-arginine translocation (Tat) system that transports large folded proteins containing a characteristic twin-arginine motif in their signal peptide across membranes. TatA could form the protein-conducting channel of the Tat system. The chain is Sec-independent protein translocase protein TatA from Bordetella avium (strain 197N).